The following is an 83-amino-acid chain: NAD(P)H-quinone oxidoreductase subunit L (83 aa).

2 consecutive transmembrane segments (helical) span residues 17–37 and 53–73; these read VLLA…LALL and TAIY…APFI.

Belongs to the complex I NdhL subunit family. As to quaternary structure, NDH-1 can be composed of about 15 different subunits; different subcomplexes with different compositions have been identified which probably have different functions.

It is found in the cellular thylakoid membrane. The catalysed reaction is a plastoquinone + NADH + (n+1) H(+)(in) = a plastoquinol + NAD(+) + n H(+)(out). The enzyme catalyses a plastoquinone + NADPH + (n+1) H(+)(in) = a plastoquinol + NADP(+) + n H(+)(out). NDH-1 shuttles electrons from an unknown electron donor, via FMN and iron-sulfur (Fe-S) centers, to quinones in the respiratory and/or the photosynthetic chain. The immediate electron acceptor for the enzyme in this species is believed to be plastoquinone. Couples the redox reaction to proton translocation, and thus conserves the redox energy in a proton gradient. Cyanobacterial NDH-1 also plays a role in inorganic carbon-concentration. The polypeptide is NAD(P)H-quinone oxidoreductase subunit L (Synechococcus sp. (strain RCC307)).